The primary structure comprises 600 residues: UvrABC system protein C (600 aa).

One can recognise a GIY-YIG domain in the interval 15 to 100 (NSAGVYQYFN…IKQLHPKYNI (86 aa)). The 36-residue stretch at 203-238 (SVLLKNLEKQMLVLAQNENYEEAAKVRDQIAMIKDL) folds into the UVR domain.

This sequence belongs to the UvrC family. Interacts with UvrB in an incision complex.

Its subcellular location is the cytoplasm. In terms of biological role, the UvrABC repair system catalyzes the recognition and processing of DNA lesions. UvrC both incises the 5' and 3' sides of the lesion. The N-terminal half is responsible for the 3' incision and the C-terminal half is responsible for the 5' incision. This Campylobacter jejuni (strain RM1221) protein is UvrABC system protein C.